A 236-amino-acid polypeptide reads, in one-letter code: 15,16-dihydrobiliverdin:ferredoxin oxidoreductase (236 aa).

Belongs to the HY2 family.

It catalyses the reaction 15,16-dihydrobiliverdin + oxidized 2[4Fe-4S]-[ferredoxin] = biliverdin IXalpha + reduced 2[4Fe-4S]-[ferredoxin] + 2 H(+). Its function is as follows. Catalyzes the two-electron reduction of biliverdin IX-alpha at the C15 methine bridge. The chain is 15,16-dihydrobiliverdin:ferredoxin oxidoreductase from Prochlorococcus marinus (strain MIT 9215).